The sequence spans 66 residues: Large ribosomal subunit protein eL29 (66 aa).

Residues 1-14 show a composition bias toward polar residues; sequence MAKSKNSTNKNQIS. Residues 1 to 66 are disordered; that stretch reads MAKSKNSTNK…KNLEKKVNKE (66 aa). The segment covering 15–31 has biased composition (basic residues); it reads KSHRNGIKKPKDHRHIS. Residues 47 to 66 show a composition bias toward basic and acidic residues; sequence IKNDPSIKKSKNLEKKVNKE.

It belongs to the eukaryotic ribosomal protein eL29 family.

The protein localises to the cytoplasm. The chain is Large ribosomal subunit protein eL29 (RPL29) from Tetrahymena thermophila.